The sequence spans 372 residues: MRVGPVRSAMSGASQPRGPALLFPATRGVPAKRLLDADDAAAVAAKCPRLSECSSPPDYLSPPGSPCSPQPPPAAPGAGGGSGSAPGPSRIADYLLLPLAEREHVSRALCIHTGRELRCKVFPIKHYQDKIRPYIQLPSHSNITGIVEVILGETKAYVFFEKDFGDMHSYVRSRKRLREEEAARLFKQIVSAVAHCHQSAIVLGDLKLRKFVFSTEERTQLRLESLEDTHIMKGEDDALSDKHGCPAYVSPEILNTTGTYSGKAADVWSLGVMLYTLLVGRYPFHDSDPSALFSKIRRGQFCIPEHISPKARCLIRSLLRREPSERLTAPEILLHPWFESVLEPGYIDSEIGTSDQIVPEYQEDSDISSFFC.

Disordered regions lie at residues 1-23 and 52-86; these read MRVG…ALLF and ECSS…GSAP. Residues 59–75 are compositionally biased toward pro residues; it reads YLSPPGSPCSPQPPPAA. Residues 91–338 form the Protein kinase domain; the sequence is IADYLLLPLA…APEILLHPWF (248 aa). A COP1-binding motif is present at residues 355 to 360; that stretch reads DQIVPE.

It belongs to the protein kinase superfamily. CAMK Ser/Thr protein kinase family. Tribbles subfamily. In terms of assembly, monomer. Interacts (via protein kinase domain) with CEBPA. Interacts with COP1. Expressed in most human tissues with the highest levels in skeletal muscle, thyroid gland, pancreas, peripheral blood leukocytes, and bone marrow.

In terms of biological role, adapter protein involved in protein degradation by interacting with COP1 ubiquitin ligase. The COP1-binding motif is masked by autoinhibitory interactions with the protein kinase domain. Serves to alter COP1 substrate specificity by directing the activity of COP1 toward CEBPA. Binds selectively the recognition sequence of CEBPA. Regulates myeloid cell differentiation by altering the expression of CEBPA in a COP1-dependent manner. Controls macrophage, eosinophil and neutrophil differentiation via the COP1-binding domain. Interacts with MAPK kinases and regulates activation of MAP kinases, but has no kinase activity. The protein is Tribbles homolog 1 of Homo sapiens (Human).